Here is a 190-residue protein sequence, read N- to C-terminus: Protein PLANT CADMIUM RESISTANCE 8 (190 aa).

The segment at 1–31 (MGRVTTPSEEDSNNGLPVQQPGTPNQRTRVP) is disordered. Residues 13–28 (NNGLPVQQPGTPNQRT) show a composition bias toward polar residues. At Thr-23 the chain carries Phosphothreonine. The helical transmembrane segment at 94–113 (LGTFMYLLMMPALCSHWVMG) threads the bilayer.

It belongs to the cornifelin family.

Its subcellular location is the cell membrane. Functionally, may be involved in heavy metals transport. In Arabidopsis thaliana (Mouse-ear cress), this protein is Protein PLANT CADMIUM RESISTANCE 8 (PCR8).